The chain runs to 354 residues: S-adenosylmethionine:tRNA ribosyltransferase-isomerase (354 aa).

The protein belongs to the QueA family. Monomer.

It is found in the cytoplasm. It catalyses the reaction 7-aminomethyl-7-carbaguanosine(34) in tRNA + S-adenosyl-L-methionine = epoxyqueuosine(34) in tRNA + adenine + L-methionine + 2 H(+). Its pathway is tRNA modification; tRNA-queuosine biosynthesis. In terms of biological role, transfers and isomerizes the ribose moiety from AdoMet to the 7-aminomethyl group of 7-deazaguanine (preQ1-tRNA) to give epoxyqueuosine (oQ-tRNA). In Pseudomonas syringae pv. tomato (strain ATCC BAA-871 / DC3000), this protein is S-adenosylmethionine:tRNA ribosyltransferase-isomerase.